Here is a 602-residue protein sequence, read N- to C-terminus: VIN3-like protein 1 (602 aa).

The interval 1–38 (MDSSSTKSKISHSRKTNKKSNKKHESNGKQQQQQDVDG) is disordered. Residues 9–22 (KISHSRKTNKKSNK) show a composition bias toward basic residues. The PHD-type zinc-finger motif lies at 67-137 (RCSCCVCHNF…CFCCYSCGKV (71 aa)). The short motif at 144–151 (WKKQLVAA) is the Nuclear localization signal element. The Fibronectin type-III domain occupies 242 to 340 (VPAACRFHFE…AMCFTKSVEI (99 aa)). The disordered stretch occupies residues 430-470 (LNEEFTPPDSSGGEDNGVPLNSLAEADGGDHDDNCDDAVSN). The tract at residues 502 to 602 (AISDSNDSEN…RPNNGVMTSH (101 aa)) is VIN3-Interacting Domain (VID).

As to quaternary structure, interacts with VIN3 and VIL2. The heterodimer made of VIN3 and VIL1 is required for establishing the vernalization-induced epigenetic silencing of FLC. Component of the plant homeodomain / polycomb repressive complex 2 (PHD-PRC2) large complex during prolonged cold, composed of core PRC2 components (VRN2, EZA1, FIE and MSI1), and three related PHD finger proteins (VIL1, VIL2 and VIN3) that mediates histone H3 trimethylation on 'Lys-27' (H3K27me3). As to expression, accumulates in shoot and root apices, and in leaves.

The protein resides in the nucleus. The protein localises to the nucleus speckle. Its function is as follows. Involved in both the vernalization and photoperiod pathways by regulating expression of the related floral repressors FLOWERING LOCUS C (FLC) and FLOWERING LOCUS M (FLM). Together with VIN3, required during vernalization for the modifications of FLC and FLM chromatin that are associated with an epigenetically silenced state (e.g. chromatin modifications, histone deacetylation, and trimethylated H3 'Lys-4' H3K4me3 and 'Lys-27' H3K27me3) and with acquisition of competence to flower. Promotes flowering in short days (SD=8 hours light/16 hours dark). Associates dynamically at FLC locus; during vernalization, binds to specific sites, but when in warm conditions, distributed along the whole locus. The chain is VIN3-like protein 1 (VIL1) from Arabidopsis thaliana (Mouse-ear cress).